The chain runs to 614 residues: Probable ATP-dependent RNA helicase DDX5 (614 aa).

Over residues 1–15 (MSSYSSDRDRGRDRG) the composition is skewed to basic and acidic residues. The disordered stretch occupies residues 1–39 (MSSYSSDRDRGRDRGFGAPRFGGSRTGPLSGKKFGNPGE). Phosphoserine is present on Ser-24. N6-acetyllysine; alternate is present on Lys-32. A Glycyl lysine isopeptide (Lys-Gly) (interchain with G-Cter in SUMO2); alternate cross-link involves residue Lys-32. N6-acetyllysine is present on residues Lys-33 and Lys-40. A Glycyl lysine isopeptide (Lys-Gly) (interchain with G-Cter in SUMO2) cross-link involves residue Lys-45. Residue Lys-53 forms a Glycyl lysine isopeptide (Lys-Gly) (interchain with G-Cter in SUMO2); alternate linkage. A Glycyl lysine isopeptide (Lys-Gly) (interchain with G-Cter in SUMO); alternate cross-link involves residue Lys-53. A Glycyl lysine isopeptide (Lys-Gly) (interchain with G-Cter in SUMO1); alternate cross-link involves residue Lys-53. Residues 94 to 122 (LNFYEANFPANVMDVIARQNFTEPTAIQA) carry the Q motif motif. Residues 114–116 (FTE), Gln-121, and 138–145 (AQTGSGKT) contribute to the ATP site. The region spanning 125-300 (WPVALSGLDM…EDFLKDYIHI (176 aa)) is the Helicase ATP-binding domain. At Lys-236 the chain carries N6-acetyllysine. The short motif at 248–251 (DEAD) is the DEAD box element. A Phosphotyrosine modification is found at Tyr-297. Residues 328–475 (KLIRLMEEIM…AINPKLLQLV (148 aa)) form the Helicase C-terminal domain. Glycyl lysine isopeptide (Lys-Gly) (interchain with G-Cter in SUMO2) cross-links involve residues Lys-340, Lys-343, Lys-388, Lys-391, Lys-411, Lys-437, Lys-451, and Lys-470. The tract at residues 477-504 (DRGSGRSRGRGGMKDDRRDRYSAGKRGG) is disordered. The segment at 477–614 (DRGSGRSRGR…GYPMPTGYSQ (138 aa)) is transactivation domain. The residue at position 480 (Ser-480) is a Phosphoserine. Basic and acidic residues predominate over residues 488–498 (GMKDDRRDRYS). Lys-523 is covalently cross-linked (Glycyl lysine isopeptide (Lys-Gly) (interchain with G-Cter in SUMO2)).

This sequence belongs to the DEAD box helicase family. DDX5/DBP2 subfamily. As to quaternary structure, identified in the spliceosome C complex. Component of a ribonucleoprotein complex containing mRNAs and RNA-binding proteins including DDX5, HNRNPH2 and SRSF1 as well as splicing regulator ARVCF. Interacts with RBM4; the interaction occurs in an RNA-independent manner. Interacts with AGO1 and AGO2. Interacts with ESR1, AR, EP300, CREBBP, POLR2A, TP53, RUNX2 and HDAC1. Self-associates. Interacts with DDX17. Interacts with BRDT. The large PER complex involved in the repression of transcriptional termination is composed of at least PER2, CDK9, DDX5, DHX9, NCBP1 and POLR2A (active). Interacts with DHX36; this interaction occurs in a RNA-dependent manner. Interacts with NUPR1. Interacts with ERCC6. Interacts with DDX3X in the cytoplasm; this interaction may be more efficient when both proteins are unphosphorylated. In terms of processing, sumoylated; sumoylation, promoted by PIAS1, promotes interaction with HDAC1 and transcriptional repression activity. Sumoylation also significantly increases stability, and reduces polyubiquitination. Post-translationally, polyubiquitinated, leading to proteasomal degradation. Weakly phosphorylated in the G1/S phase of the cell cycle and much more at G2/M, especially at Thr and Tyr residues.

The protein localises to the nucleus. Its subcellular location is the nucleolus. It is found in the cytoplasm. The catalysed reaction is ATP + H2O = ADP + phosphate + H(+). In terms of biological role, involved in the alternative regulation of pre-mRNA splicing; its RNA helicase activity is necessary for increasing tau exon 10 inclusion and occurs in a RBM4-dependent manner. Binds to the tau pre-mRNA in the stem-loop region downstream of exon 10. The rate of ATP hydrolysis is highly stimulated by single-stranded RNA. Involved in transcriptional regulation; the function is independent of the RNA helicase activity. Transcriptional coactivator for androgen receptor AR but probably not ESR1. Synergizes with DDX17 and SRA1 RNA to activate MYOD1 transcriptional activity and involved in skeletal muscle differentiation. Transcriptional coactivator for p53/TP53 and involved in p53/TP53 transcriptional response to DNA damage and p53/TP53-dependent apoptosis. Transcriptional coactivator for RUNX2 and involved in regulation of osteoblast differentiation. Acts as a transcriptional repressor in a promoter-specific manner; the function probably involves association with histone deacetylases, such as HDAC1. As component of a large PER complex is involved in the inhibition of 3' transcriptional termination of circadian target genes such as PER1 and NR1D1 and the control of the circadian rhythms. This Mus musculus (Mouse) protein is Probable ATP-dependent RNA helicase DDX5 (Ddx5).